Here is a 208-residue protein sequence, read N- to C-terminus: Outer-membrane lipoprotein LolB (208 aa).

The first 17 residues, 1-17 (MIRRLLGVALLTGAITG), serve as a signal peptide directing secretion. The N-palmitoyl cysteine moiety is linked to residue C18. Residue C18 is the site of S-diacylglycerol cysteine attachment.

It belongs to the LolB family. Monomer.

It localises to the cell outer membrane. Its function is as follows. Plays a critical role in the incorporation of lipoproteins in the outer membrane after they are released by the LolA protein. The polypeptide is Outer-membrane lipoprotein LolB (Marinobacter nauticus (strain ATCC 700491 / DSM 11845 / VT8) (Marinobacter aquaeolei)).